The following is a 525-amino-acid chain: Lysine--tRNA ligase (525 aa).

Residues 40 to 48 carry the 'HIGH' region motif; that stretch reads ASGIPHMGS. Residues 295-299 carry the 'KMSKS' region motif; the sequence is KISKS. Lys-298 contacts ATP.

It belongs to the class-I aminoacyl-tRNA synthetase family.

Its subcellular location is the cytoplasm. It carries out the reaction tRNA(Lys) + L-lysine + ATP = L-lysyl-tRNA(Lys) + AMP + diphosphate. This Cenarchaeum symbiosum (strain A) protein is Lysine--tRNA ligase (lysS).